A 756-amino-acid chain; its full sequence is Phosphate transporter PHO1 homolog 6 (756 aa).

An SPX domain is found at 1-303 (MKFGKDFSSE…SRDAAKSYMK (303 aa)). Over 1 to 355 (MKFGKDFSSE…KPKRERHRLT (355 aa)) the chain is Cytoplasmic. Residues 356-376 (FSTGFLGGCMFSLIVALVAIV) traverse the membrane as a helical segment. The Extracellular portion of the chain corresponds to 377–396 (RTRNILQDDGQKQYMNTMFP). A helical membrane pass occupies residues 397-417 (LYSLFGFIMLHMTMYAANIYF). At 418–440 (WRQYRVNYSFIFGFKQGTELGYK) the chain is on the cytoplasmic side. The helical transmembrane segment at 441-461 (QVLFVGFSIGALALLCVLANL) threads the bilayer. Topologically, residues 462 to 477 (DMETDPKTKDYQALTE) are extracellular. The helical transmembrane segment at 478 to 498 (LLPLFLLIAMFVVLVVPFNIF) threads the bilayer. Topologically, residues 499-631 (YRSSRFFFLT…DEKDRQIIWR (133 aa)) are cytoplasmic. The EXS domain occupies 562-756 (KDSQVFNTFL…SLPFNYEVDH (195 aa)). The helical transmembrane segment at 632-652 (LLGGITSAMAVVFCTYWDLVY) threads the bilayer. Residues 653 to 676 (DWGLLNRTSKNPWLRDNLLIPHKE) lie on the Extracellular side of the membrane. A helical membrane pass occupies residues 677–697 (VYVLAMILNVVLRFAWMQTVL). Over 698 to 756 (DFKFESIHTQTVVAVVASLEIIRRGIWNFFRLENEHLNNVGKYRAFKAVSLPFNYEVDH) the chain is Cytoplasmic.

This sequence belongs to the SYG1 (TC 2.A.94) family. As to expression, specifically expressed in anther connective tissue.

The protein localises to the cell membrane. May transport inorganic phosphate (Pi). This Arabidopsis thaliana (Mouse-ear cress) protein is Phosphate transporter PHO1 homolog 6 (PHO1-H6).